Reading from the N-terminus, the 350-residue chain is UDP-N-acetylenolpyruvoylglucosamine reductase (350 aa).

One can recognise an FAD-binding PCMH-type domain in the interval 24-195; the sequence is HVEATARWLL…VAVEFNLPLL (172 aa). Residue R172 is part of the active site. Residue S245 is the Proton donor of the active site. E342 is an active-site residue.

The protein belongs to the MurB family. Requires FAD as cofactor.

The protein resides in the cytoplasm. The enzyme catalyses UDP-N-acetyl-alpha-D-muramate + NADP(+) = UDP-N-acetyl-3-O-(1-carboxyvinyl)-alpha-D-glucosamine + NADPH + H(+). It participates in cell wall biogenesis; peptidoglycan biosynthesis. Cell wall formation. The chain is UDP-N-acetylenolpyruvoylglucosamine reductase from Xanthomonas oryzae pv. oryzae (strain MAFF 311018).